We begin with the raw amino-acid sequence, 278 residues long: Methyltransferase adrK (278 aa).

S-adenosyl-L-methionine-binding positions include Asp-124–Leu-125, Asp-151–Val-152, and Val-152–Leu-153.

The protein belongs to the class I-like SAM-binding methyltransferase superfamily. Homodimer.

It participates in secondary metabolite biosynthesis; terpenoid biosynthesis. In terms of biological role, methyltransferase; part of the gene cluster that mediates the biosynthesis of andrastins, meroterpenoid compounds that exhibit inhibitory activity against ras farnesyltransferase, suggesting that they could be promising leads for antitumor agents. The first step of the pathway is the synthesis of 3,5-dimethylorsellinic acid (DMOA) by the polyketide synthase adrD via condensation of one acetyl-CoA starter unit with 3 malonyl-CoA units and 2 methylations. DMAO is then converted to farnesyl-DMAO by the prenyltransferase adrG. The methyltransferase adrK catalyzes the methylation of the carboxyl group of farnesyl-DMAO to farnesyl-DMAO methyl ester which is further converted to epoxyfarnesyl-DMAO methyl ester by the FAD-dependent monooxygenase adrH. The terpene cyclase adrI then catalyzes the carbon skeletal rearrangement to generate the andrastin E, the first compound in the pathway having the andrastin scaffold, with the tetracyclic ring system. The post-cyclization tailoring enzymes adrF, adrE, adrJ, and adrA, are involved in the conversion of andrastin E into andrastin A. The short chain dehydrogenase adrF is responsible for the oxidation of the C-3 a hydroxyl group of andrastin E to yield the corresponding ketone, andrastin D. The ketoreductase adrE stereoselectively reduces the carbonyl moiety to reverse the stereochemistry of the C-3 position to yield andrastin F. The acetyltransferase adrJ is the acetyltransferase that attaches the acetyl group to the C-3 hydroxyl group of andrastin F to yield andrastin C. Finally, the cytochrome P450 monooxygenase adrA catalyzes two sequential oxidation reactions of the C-23 methyl group, to generate the corresponding alcohol andrastin B, and aldehyde andrastin A. The sequence is that of Methyltransferase adrK from Penicillium roqueforti.